The following is a 485-amino-acid chain: Glutathione gamma-glutamylcysteinyltransferase 1 (485 aa).

Residues 1–221 (MAMASLYRRS…GFMLISRPHR (221 aa)) form the Peptidase C83 domain. Catalysis depends on residues cysteine 56, histidine 162, and aspartate 180.

The protein belongs to the phytochelatin synthase family. In terms of tissue distribution, expressed in roots and shoots.

It carries out the reaction [Glu(-Cys)](n)-Gly + glutathione + H(+) = [Glu(-Cys)](n+1)-Gly + glycine. With respect to regulation, requires cadmium for activity. Also activated in vitro or in heterologous system by Ag(+), Hg(+), Zn(2+), Cu(2+), Fe(2+) or Fe(3+) ions, but not by Co(2+) or Ni(2+) ions. Involved in the synthesis of phytochelatins (PC) and homophytochelatins (hPC), the heavy-metal-binding peptides of plants. Also involved in glutathione-conjugates degradation. This chain is Glutathione gamma-glutamylcysteinyltransferase 1 (PCS1), found in Arabidopsis thaliana (Mouse-ear cress).